A 1944-amino-acid polypeptide reads, in one-letter code: uncharacterized protein (1944 aa).

The disordered stretch occupies residues 908 to 999 (SQNLNFLKSK…SESEEESSNG (92 aa)). Composition is skewed to basic and acidic residues over residues 916 to 929 (SKQETTQRIRESAK) and 939 to 949 (LSEKLNSDNHI). The segment covering 985 to 996 (SDEDTSESEEES) has biased composition (acidic residues). ATP is bound at residue 1293-1300 (GPPGTGKT). Residues 1824-1944 (QEAHKVKKRH…PPKVEHFKRK (121 aa)) form a disordered region. 2 stretches are compositionally biased toward basic and acidic residues: residues 1843–1852 (GTERDEDIPN) and 1869–1891 (KVTKPRLDESSSSKQDVLNKIDE). Over residues 1912–1922 (GHMKKSKKPKS) the composition is skewed to basic residues.

It belongs to the DNA2/NAM7 helicase family.

The protein resides in the nucleus. This is an uncharacterized protein from Schizosaccharomyces pombe (strain 972 / ATCC 24843) (Fission yeast).